We begin with the raw amino-acid sequence, 403 residues long: Phosphopentomutase (403 aa).

Positions 13, 298, 303, 339, 340, and 351 each coordinate Mn(2+).

It belongs to the phosphopentomutase family. Mn(2+) serves as cofactor.

Its subcellular location is the cytoplasm. It carries out the reaction 2-deoxy-alpha-D-ribose 1-phosphate = 2-deoxy-D-ribose 5-phosphate. The enzyme catalyses alpha-D-ribose 1-phosphate = D-ribose 5-phosphate. Its pathway is carbohydrate degradation; 2-deoxy-D-ribose 1-phosphate degradation; D-glyceraldehyde 3-phosphate and acetaldehyde from 2-deoxy-alpha-D-ribose 1-phosphate: step 1/2. Functionally, isomerase that catalyzes the conversion of deoxy-ribose 1-phosphate (dRib-1-P) and ribose 1-phosphate (Rib-1-P) to deoxy-ribose 5-phosphate (dRib-5-P) and ribose 5-phosphate (Rib-5-P), respectively. This is Phosphopentomutase from Streptococcus thermophilus.